The chain runs to 233 residues: MAKLTKRMRVIREKVDGTKLYEINDAVALLKELATAKFVESVDVAVNLGIDPRKSDQNVRGATVLPHGTGRDVRVAVFTQGANAEAAKAAGAELVGMDDLAEQIKAGEMNFDVVIASPDAMRVVGMLGQILGPRGLMPNPKTGTVTPNVAEAVKNAKAGQVRYRNDKNGIIHTTIGKVDFTPVQLKENLEALISALKKAKPAVAKGVYVKKVSISTTMGAGVAIDQATLETAN.

This sequence belongs to the universal ribosomal protein uL1 family. Part of the 50S ribosomal subunit.

Functionally, binds directly to 23S rRNA. The L1 stalk is quite mobile in the ribosome, and is involved in E site tRNA release. Its function is as follows. Protein L1 is also a translational repressor protein, it controls the translation of the L11 operon by binding to its mRNA. This chain is Large ribosomal subunit protein uL1, found in Shewanella sp. (strain MR-4).